A 134-amino-acid chain; its full sequence is Prefoldin subunit 4 (134 aa).

Ala-2 is modified (N-acetylalanine). Ser-125 is subject to Phosphoserine.

It belongs to the prefoldin subunit beta family. As to quaternary structure, heterohexamer of two PFD-alpha type and four PFD-beta type subunits. Interacts with URI1; the interaction is phosphorylation-dependent and occurs in a growth-dependent manner.

The protein localises to the nucleus. The protein resides in the cytoplasm. It is found in the mitochondrion. Functionally, binds specifically to cytosolic chaperonin (c-CPN) and transfers target proteins to it. Binds to nascent polypeptide chain and promotes folding in an environment in which there are many competing pathways for nonnative proteins. In Homo sapiens (Human), this protein is Prefoldin subunit 4 (PFDN4).